The chain runs to 140 residues: uncharacterized protein (140 aa).

It belongs to the asfivirus D129L family.

This is an uncharacterized protein from African swine fever virus (isolate Pig/Kenya/KEN-50/1950) (ASFV).